The sequence spans 1011 residues: Liprin-beta-1 (1011 aa).

Ser-37 carries the post-translational modification Phosphoserine. Thr-39 carries the phosphothreonine modification. A Phosphoserine modification is found at Ser-40. Residues 156–405 (QQELLSRTSL…VPEEFHTTIL (250 aa)) adopt a coiled-coil conformation. Lys-322 bears the N6-acetyllysine mark. Disordered stretches follow at residues 420–439 (ETSE…EEND) and 463–634 (KSSS…RDLG). A phosphoserine mark is found at Ser-434 and Ser-466. Positions 470–492 (LKKETSDGEKETIQKTSEDRAPA) are enriched in basic and acidic residues. A Glycyl lysine isopeptide (Lys-Gly) (interchain with G-Cter in SUMO2) cross-link involves residue Lys-471. A phosphoserine mark is found at Ser-523 and Ser-540. A compositionally biased stretch (basic and acidic residues) spans 546–556 (ETEKETAEHLD). Position 579 is a phosphoserine (Ser-579). Over residues 584–598 (KKSRGIMKLFGKLRR) the composition is skewed to basic residues. A phosphoserine mark is found at Ser-601 and Ser-636. SAM domains lie at 647-711 (WTKE…LGSE) and 719-782 (LDFN…LRIN). Ser-794 carries the phosphoserine modification. The SAM 3 domain occupies 804–876 (VQKWTNHRVM…ATHFNLLIGA (73 aa)). Phosphoserine is present on residues Ser-999, Ser-1001, and Ser-1003. At Thr-1005 the chain carries Phosphothreonine.

It belongs to the liprin family. Liprin-beta subfamily. Forms homodimers and heterodimers. Interacts with S100A4 in a Ca(2+)-dependent mode. Part of a cortical microtubule stabilization complex (CMSC) composed of KANK1, PPFIA1, PPFIBP1, ERC1/ELKS, PHLDB2/LL5beta, CLASPs, KIF21A and possibly additional interactors; within CMSCs KANK1 and PHLDB2/LL5beta seem to be the core components for recruiting microtubule-binding proteins KIF21A and CLASPs, whereas PPFIA1, PPFIBP1 and ERC1/ELKS serve as scaffolds for protein clustering. Interacts with KANK1 (via CC1 domain, residues 244-339). Widely expressed. Absent in liver.

The protein resides in the cytoplasm. Its subcellular location is the cell cortex. Its function is as follows. May regulate the disassembly of focal adhesions. Did not bind receptor-like tyrosine phosphatases type 2A. This is Liprin-beta-1 (PPFIBP1) from Homo sapiens (Human).